Consider the following 107-residue polypeptide: Insulin-like peptide 6 (107 aa).

A signal peptide spans 1–33 (MVLKVPTSKVLLVLATLFAVAAMISSWMPQVAA). 3 disulfide bridges follow: Cys48–Cys91, Cys60–Cys105, and Cys90–Cys96. Residues 67–76 (LGDVFPNSFG) constitute a propeptide, connecting peptide.

Belongs to the insulin family. In terms of assembly, heterodimer of a B chain and an A chain linked by two disulfide bonds. Expressed at a low level in the larval gut.

The protein localises to the secreted. In terms of biological role, possible ligand of InR/insulin-like receptor. This is Insulin-like peptide 6 from Drosophila melanogaster (Fruit fly).